Consider the following 338-residue polypeptide: Heat-inducible transcription repressor HrcA (338 aa).

This sequence belongs to the HrcA family.

In terms of biological role, negative regulator of class I heat shock genes (grpE-dnaK-dnaJ and groELS operons). Prevents heat-shock induction of these operons. The sequence is that of Heat-inducible transcription repressor HrcA from Bacillus cereus (strain AH820).